The sequence spans 359 residues: 3-dehydroquinate synthase (359 aa).

Residues 71–76, 105–109, 129–130, K142, and K151 each bind NAD(+); these read DGEAYK, GVVGD, and TT. 3 residues coordinate Zn(2+): E184, H247, and H264.

Belongs to the sugar phosphate cyclases superfamily. Dehydroquinate synthase family. Co(2+) is required as a cofactor. Zn(2+) serves as cofactor. The cofactor is NAD(+).

The protein resides in the cytoplasm. It catalyses the reaction 7-phospho-2-dehydro-3-deoxy-D-arabino-heptonate = 3-dehydroquinate + phosphate. It participates in metabolic intermediate biosynthesis; chorismate biosynthesis; chorismate from D-erythrose 4-phosphate and phosphoenolpyruvate: step 2/7. Catalyzes the conversion of 3-deoxy-D-arabino-heptulosonate 7-phosphate (DAHP) to dehydroquinate (DHQ). The chain is 3-dehydroquinate synthase from Burkholderia cenocepacia (strain HI2424).